The chain runs to 174 residues: Nascent polypeptide-associated complex subunit alpha (174 aa).

Ser2 carries the N-acetylserine modification. Positions 14-78 constitute an NAC-A/B domain; sequence NKNEKKAREL…AKVDNFTQKL (65 aa). Positions 85-137 are disordered; it reads AQASGIMPSNEDVATKSPEDIQADMQAAAEGSVNAAAEEDDEEGEVDAGDLNK. At Ser93 the chain carries Phosphoserine. A compositionally biased stretch (low complexity) spans 111 to 120; the sequence is AAAEGSVNAA. A compositionally biased stretch (acidic residues) spans 121–132; the sequence is AEEDDEEGEVDA. The UBA domain maps to 135–174; that stretch reads LNKDDIELVVQQTNVSKNQAIKALKAHNGDLVNAIMSLSK.

It belongs to the NAC-alpha family. As to quaternary structure, part of the nascent polypeptide-associated complex (NAC), consisting of EGD2 and either EGD1 or BTT1. NAC associates with ribosomes via EGD1 or BTT1, and with the CCR4-NOT complex.

The protein resides in the cytoplasm. Its subcellular location is the nucleus. In terms of biological role, component of the nascent polypeptide-associated complex (NAC), a dynamic component of the ribosomal exit tunnel, protecting the emerging polypeptides from interaction with other cytoplasmic proteins to ensure appropriate nascent protein targeting. The NAC complex also promotes mitochondrial protein import by enhancing productive ribosome interactions with the outer mitochondrial membrane and blocks the inappropriate interaction of ribosomes translating non-secretory nascent polypeptides with translocation sites in the membrane of the endoplasmic reticulum. EGD2 may also be involved in transcription regulation. The chain is Nascent polypeptide-associated complex subunit alpha (EGD2) from Saccharomyces cerevisiae (strain YJM789) (Baker's yeast).